We begin with the raw amino-acid sequence, 364 residues long: MVREEQEEDDNNNNNNGGGERKLLVADETVPSLLDETGLVCVTGGSGFVASWLIMRLLQRGYSVRATVRTNSEGNKKDISYLTELPFASERLQIFTADLNEPESFKPAIEGCKAVFHVAHPMDPNSNETEETVTKRTVQGLMGILKSCLDAKTVKRFFYTSSAVTVFYSGGNGGGGGEVDESVWSDVEVFRNQKEKRVSSSYVVSKMAAETAALEFGGKNGLEVVTLVIPLVVGPFISSSLPSSVFISLAMLFGNYKEKYLFDTYNMVHIDDVARAMIFLLEKPVAKGRYICSSVEMKIDEVFEFLSTKFPQFQLPSIDLNKYKVEKRMGLSSKKLKSAGFEFKYGAEEIFSGAIRSCQARGFL.

Over residues 1 to 11 (MVREEQEEDDN) the composition is skewed to acidic residues. Residues 1-22 (MVREEQEEDDNNNNNNGGGERK) form a disordered region. Residues 44–49 (GGSGFV), Arg-69, 98–99 (DL), Tyr-202, Lys-206, Val-232, and Ser-244 contribute to the NADP(+) site. The Proton donor role is filled by Lys-206.

The protein belongs to the NAD(P)-dependent epimerase/dehydratase family. Monomer. Mainly present in cell elongating-containing tissues. Strongly expressed in roots and flowers, also observed in petioles, stems, leaves and siliques.

It is found in the cytoplasm. Its pathway is plant hormone biosynthesis; brassinosteroid biosynthesis. Its function is as follows. Element of the brassinosteroid metabolic pathway that regulates typhasterol (TY), castasterone (CS) and brassinolide (BL) levels. Involved in the control of organ elongation. In Arabidopsis thaliana (Mouse-ear cress), this protein is Protein BRI1-5 ENHANCED 1.